Consider the following 727-residue polypeptide: Elongation factor 2 (727 aa).

Positions 19–260 constitute a tr-type G domain; sequence DQIRNIGICA…MVVTHLPNPV (242 aa). Residues 28 to 35, 94 to 98, and 148 to 151 contribute to the GTP site; these read AHIDHGKT, DTPGH, and NKVD. The residue at position 603 (His-603) is a Diphthamide.

Belongs to the TRAFAC class translation factor GTPase superfamily. Classic translation factor GTPase family. EF-G/EF-2 subfamily.

The protein localises to the cytoplasm. Functionally, catalyzes the GTP-dependent ribosomal translocation step during translation elongation. During this step, the ribosome changes from the pre-translocational (PRE) to the post-translocational (POST) state as the newly formed A-site-bound peptidyl-tRNA and P-site-bound deacylated tRNA move to the P and E sites, respectively. Catalyzes the coordinated movement of the two tRNA molecules, the mRNA and conformational changes in the ribosome. The sequence is that of Elongation factor 2 from Methanococcus aeolicus (strain ATCC BAA-1280 / DSM 17508 / OCM 812 / Nankai-3).